Consider the following 980-residue polypeptide: Alanine--tRNA ligase, mitochondrial (980 aa).

The transit peptide at 1–23 (MAVALAAAAGKLRRAIGRSCPWQ) directs the protein to the mitochondrion. Residues R105, H123, W205, and 235–237 (LWN) contribute to the ATP site. Residues N237 and D260 each coordinate L-alanine. G264 provides a ligand contact to ATP. Residues H627, H631, C744, and H748 each contribute to the Zn(2+) site.

This sequence belongs to the class-II aminoacyl-tRNA synthetase family. In terms of assembly, monomer. Requires Zn(2+) as cofactor.

It is found in the mitochondrion. It catalyses the reaction tRNA(Ala) + L-alanine + ATP = L-alanyl-tRNA(Ala) + AMP + diphosphate. The enzyme catalyses (S)-lactate + ATP + H(+) = (S)-lactoyl-AMP + diphosphate. The catalysed reaction is (S)-lactoyl-AMP + L-lysyl-[protein] = N(6)-[(S)-lactoyl]-L-lysyl-[protein] + AMP + 2 H(+). Catalyzes the attachment of alanine to tRNA(Ala) in a two-step reaction: alanine is first activated by ATP to form Ala-AMP and then transferred to the acceptor end of tRNA(Ala). Also edits incorrectly charged tRNA(Ala) via its editing domain. In presence of high levels of lactate, also acts as a protein lactyltransferase that mediates lactylation of lysine residues in target proteins, such as CGAS. Acts as an inhibitor of cGAS/STING signaling by catalyzing lactylation of CGAS, preventing the formation of liquid-like droplets in which CGAS is activated. The polypeptide is Alanine--tRNA ligase, mitochondrial (Aars2) (Mus musculus (Mouse)).